Consider the following 210-residue polypeptide: Thymidylate kinase (210 aa).

Residue 10–17 participates in ATP binding; it reads GPEGAGKS.

It belongs to the thymidylate kinase family.

The catalysed reaction is dTMP + ATP = dTDP + ADP. Phosphorylation of dTMP to form dTDP in both de novo and salvage pathways of dTTP synthesis. The chain is Thymidylate kinase from Pseudomonas putida (strain GB-1).